A 253-amino-acid polypeptide reads, in one-letter code: Phosphate import ATP-binding protein PstB (253 aa).

In terms of domain architecture, ABC transporter spans 1–249 (MKLMDVRVSG…PRHELTKKFL (249 aa)). 38–45 (GPSGSGKS) provides a ligand contact to ATP.

This sequence belongs to the ABC transporter superfamily. Phosphate importer (TC 3.A.1.7) family. As to quaternary structure, the complex is composed of two ATP-binding proteins (PstB), two transmembrane proteins (PstC and PstA) and a solute-binding protein (PstS).

It is found in the cell membrane. It carries out the reaction phosphate(out) + ATP + H2O = ADP + 2 phosphate(in) + H(+). Its function is as follows. Part of the ABC transporter complex PstSACB involved in phosphate import. Responsible for energy coupling to the transport system. The polypeptide is Phosphate import ATP-binding protein PstB (Aeropyrum pernix (strain ATCC 700893 / DSM 11879 / JCM 9820 / NBRC 100138 / K1)).